The primary structure comprises 212 residues: Large ribosomal subunit protein bL25 (212 aa).

Residues 1 to 16 show a composition bias toward basic and acidic residues; the sequence is MKTRIDLTVEPRETGK. Positions 1–22 are disordered; sequence MKTRIDLTVEPRETGKHNSRGL.

The protein belongs to the bacterial ribosomal protein bL25 family. CTC subfamily. As to quaternary structure, part of the 50S ribosomal subunit; part of the 5S rRNA/L5/L18/L25 subcomplex. Contacts the 5S rRNA. Binds to the 5S rRNA independently of L5 and L18.

This is one of the proteins that binds to the 5S RNA in the ribosome where it forms part of the central protuberance. The protein is Large ribosomal subunit protein bL25 of Bdellovibrio bacteriovorus (strain ATCC 15356 / DSM 50701 / NCIMB 9529 / HD100).